A 207-amino-acid chain; its full sequence is Large ribosomal subunit protein bL25 (207 aa).

The segment at 171–207 is disordered; the sequence is EEETVVTVSAPRAEEEPTTTEAPEPEAVHGKDEEPVE. Residues 196–207 show a composition bias toward basic and acidic residues; sequence EAVHGKDEEPVE.

It belongs to the bacterial ribosomal protein bL25 family. CTC subfamily. In terms of assembly, part of the 50S ribosomal subunit; part of the 5S rRNA/L5/L18/L25 subcomplex. Contacts the 5S rRNA. Binds to the 5S rRNA independently of L5 and L18.

In terms of biological role, this is one of the proteins that binds to the 5S RNA in the ribosome where it forms part of the central protuberance. The polypeptide is Large ribosomal subunit protein bL25 (Listeria monocytogenes serotype 4b (strain F2365)).